A 447-amino-acid chain; its full sequence is MANSITADEIREQFSQAMSAMYQQEVPQYGTLLELVADVNLAVLENNPQLHEKMVNADELARLNVERHGAIRVGTAQELATLRRMFAIMGMYPVSYYDLSQAGVPVHSTAFRPIDDASLARNPFRVFTSLLRLELIENEILRQKAAEILRQRDIFTPRCRQLLEEYEQQGGFNETQAQEFVQEALETFRWHQLATVDEETYRALHNEHRLIADVVCFPGCHINHLTPRTLDIDRVQSMMPECGIEPKILIEGPPRREVPILLRQTSFKALEETVLFAGQKQGTHTARFGEIEQRGVALTPKGRQLYDDLLRNAGTGQDNLTHQMHLQETFRTFPDSEFLMRQQGLAWFRYRLTPSGEAHRQAIHPGDDPQPLIERGWVVAQPITYEDFLPVSAAGIFQSNLGNETQTRSHGNASREAFEQALGCPVLDEFQLYQEAEERSKRRCGLL.

H68, R72, and H224 together coordinate 2-oxoadipate. H68 is a binding site for Fe(2+). The Fe(2+) site is built by H224 and E290. A 2-oxoadipate-binding site is contributed by V391.

The protein belongs to the 2-oxoadipate dioxygenase/decarboxylase family. Fe(2+) serves as cofactor.

The enzyme catalyses 2-oxoadipate + O2 = (R)-2-hydroxyglutarate + CO2. In terms of biological role, catalyzes the decarboxylation and hydroxylation of 2-oxoadipate (2OA) to form D-2-hydroxyglutarate (D-2-HGA). The sequence is that of 2-oxoadipate dioxygenase/decarboxylase from Shigella flexneri.